The chain runs to 466 residues: MAKTLYEKLFDAHVVYEAQNETPLLYIDRHLVHEVTSPQAFDGLRAHGRQVRQPGKTFATMDHNVSTQTKDINASGEMARIQMQELIKNCKEFGVELYDLNHPYQGIVHVMGPEQGVTLPGMTIVCGDSHTATHGAFGALAFGIGTSEVEHVLATQTLKQGRAKTMKIDVQGKAAPGITAKDIVLAIIGKTGSAGGTGHVVEFCGEAIRDLSMEGRMTLCNMAIEMGAKAGLVAPDETTFNYVRGRLHAPKGKDFDDAVAYWKTLKTDDGATFDTVVTLQAAEIAPQVTWGTNPGQVISVTDNIPDPASFSDPVERASAEKALAYMGLKSGIPLTDVAIDKVFIGSCTNSRIEDLRAAAEIAKGRKVAPGVQALVVPGSGPVKAQAEAEGLDKIFIEAGFEWRLPGCSMCLAMNNDRLNPGERCASTSNRNFEGRQGRGGRTHLVSPAMAAAAAVTGHFADIRNLK.

The [4Fe-4S] cluster site is built by Cys347, Cys407, and Cys410.

Belongs to the aconitase/IPM isomerase family. LeuC type 1 subfamily. Heterodimer of LeuC and LeuD. [4Fe-4S] cluster serves as cofactor.

It carries out the reaction (2R,3S)-3-isopropylmalate = (2S)-2-isopropylmalate. Its pathway is amino-acid biosynthesis; L-leucine biosynthesis; L-leucine from 3-methyl-2-oxobutanoate: step 2/4. Catalyzes the isomerization between 2-isopropylmalate and 3-isopropylmalate, via the formation of 2-isopropylmaleate. In Klebsiella pneumoniae (strain 342), this protein is 3-isopropylmalate dehydratase large subunit.